A 300-amino-acid chain; its full sequence is MARVRQEALSSLLSARDVRDLADRLSIRPTKTLGQNFVVDANTVRRIVRVADLTPEDVVVEVGPGLGSLTLALLEAVDRVVAVEIDPVLAAELPATVAARGRPGTSFEVVLADAVQLAELPGPPPTALVANLPYNVAVPVLLTMLARFPSLRQGLVMVQSEVADRLVAPPGSRTYGVPSVKTAWYASAKRAGSVPPPVFWPVPRVDSGLVSFTRRPAPETTAGREEVFALVDAAFAQRRKTLRAALAGWAGSPAAAEEALRAAGVDPSVRGEQLGVADFARIAAHRPGGARAAGEPAGTP.

Residues asparagine 36, valine 38, glycine 63, glutamate 84, aspartate 113, and asparagine 131 each coordinate S-adenosyl-L-methionine.

Belongs to the class I-like SAM-binding methyltransferase superfamily. rRNA adenine N(6)-methyltransferase family. RsmA subfamily.

It is found in the cytoplasm. It carries out the reaction adenosine(1518)/adenosine(1519) in 16S rRNA + 4 S-adenosyl-L-methionine = N(6)-dimethyladenosine(1518)/N(6)-dimethyladenosine(1519) in 16S rRNA + 4 S-adenosyl-L-homocysteine + 4 H(+). Functionally, specifically dimethylates two adjacent adenosines (A1518 and A1519) in the loop of a conserved hairpin near the 3'-end of 16S rRNA in the 30S particle. May play a critical role in biogenesis of 30S subunits. The polypeptide is Ribosomal RNA small subunit methyltransferase A (Kineococcus radiotolerans (strain ATCC BAA-149 / DSM 14245 / SRS30216)).